A 202-amino-acid chain; its full sequence is Imidazoleglycerol-phosphate dehydratase (202 aa).

It belongs to the imidazoleglycerol-phosphate dehydratase family.

It localises to the cytoplasm. The enzyme catalyses D-erythro-1-(imidazol-4-yl)glycerol 3-phosphate = 3-(imidazol-4-yl)-2-oxopropyl phosphate + H2O. It participates in amino-acid biosynthesis; L-histidine biosynthesis; L-histidine from 5-phospho-alpha-D-ribose 1-diphosphate: step 6/9. This Corynebacterium efficiens (strain DSM 44549 / YS-314 / AJ 12310 / JCM 11189 / NBRC 100395) protein is Imidazoleglycerol-phosphate dehydratase.